Here is a 529-residue protein sequence, read N- to C-terminus: Variant surface glycoprotein MITAT 1.6 (529 aa).

The signal sequence occupies residues 1–24 (MAVHRALAAYAISLYVLLPRKSGA). 2 disulfides stabilise this stretch: Cys-39-Cys-170 and Cys-147-Cys-214. N-linked (GlcNAc...) (high mannose) asparagine glycosylation is present at Asn-456. Asp-506 carries GPI-anchor amidated aspartate lipidation. Positions 507-529 (SSILVTKKFALTVVSAAFVALLF) are cleaved as a propeptide — removed in mature form.

In terms of processing, N-glycosylated; glycan is composed of 6 to 9 mannose residues.

The protein resides in the cell membrane. In terms of biological role, VSG forms a coat on the surface of the parasite. The trypanosome evades the immune response of the host by expressing a series of antigenically distinct VSGs from an estimated 1000 VSG genes. The chain is Variant surface glycoprotein MITAT 1.6 from Trypanosoma brucei brucei.